The following is a 481-amino-acid chain: Beta-amyrin 28-monooxygenase (481 aa).

A helical transmembrane segment spans residues 4–24 (FYVPLLSLFVLFVSLSFYFLF). C428 contacts heme.

This sequence belongs to the cytochrome P450 family. It depends on heme as a cofactor.

Its subcellular location is the membrane. It carries out the reaction beta-amyrin + 3 reduced [NADPH--hemoprotein reductase] + 3 O2 = oleanolate + 3 oxidized [NADPH--hemoprotein reductase] + 4 H2O + 4 H(+). In terms of biological role, catalyzes the oxidation of the methyl group to a carboxyl group at the C-28 position of beta-amyrin to form oleanolate. This chain is Beta-amyrin 28-monooxygenase, found in Kalopanax septemlobus (Castor aralia).